Here is a 1324-residue protein sequence, read N- to C-terminus: Structural maintenance of chromosomes protein 4 (1324 aa).

A disordered region spans residues 1 to 24 (MSDKGIFRTSSTPSIVDVTPDRGE). A Phosphothreonine; by CDC2 modification is found at threonine 19. 155–162 (GPNGSGKS) is an ATP binding site. Coiled coils occupy residues 310–337 (QELSNSDDICAEKESRLKLVLSEKAKLE) and 370–628 (NKKT…KASL). The SMC hinge domain occupies 651–764 (NGFFGRLGDL…KNLEQANRIA (114 aa)). Coiled-coil stretches lie at residues 825 to 1077 (YRQH…MSNL) and 1297 to 1324 (LSSRLVGIYKTANMTKSVTINNKEILTD).

It belongs to the SMC family. SMC4 subfamily. In terms of assembly, forms a heterodimer with cut14/smc2. Component of the condensin complex, which contains the smc2 and smc4 heterodimer, and three non smc subunits that probably regulate the complex: cnd1, cnd2 and cnd3. Interacts with C1739.07. In terms of processing, phosphorylated by CDC2 on Thr-19 at metaphase.

It localises to the nucleus. The protein resides in the cytoplasm. Its subcellular location is the chromosome. Its function is as follows. Central component of the condensin complex, a complex required for conversion of interphase chromatin into mitotic-like condense chromosomes. The condensin complex probably introduces positive supercoils into relaxed DNA in the presence of type I topoisomerases and converts nicked DNA into positive knotted forms in the presence of type II topoisomerases. The polypeptide is Structural maintenance of chromosomes protein 4 (cut3) (Schizosaccharomyces pombe (strain 972 / ATCC 24843) (Fission yeast)).